Reading from the N-terminus, the 255-residue chain is 5-oxoprolinase subunit A (255 aa).

It belongs to the LamB/PxpA family. In terms of assembly, forms a complex composed of PxpA, PxpB and PxpC.

It catalyses the reaction 5-oxo-L-proline + ATP + 2 H2O = L-glutamate + ADP + phosphate + H(+). Catalyzes the cleavage of 5-oxoproline to form L-glutamate coupled to the hydrolysis of ATP to ADP and inorganic phosphate. This is 5-oxoprolinase subunit A from Pyrococcus furiosus (strain ATCC 43587 / DSM 3638 / JCM 8422 / Vc1).